Reading from the N-terminus, the 348-residue chain is Ion-translocating oxidoreductase complex subunit D (348 aa).

5 helical membrane-spanning segments follow: residues Leu-15–Ala-35, Tyr-36–Ile-56, Pro-67–Ser-87, Ile-88–Ala-108, and Val-125–Ile-145. Thr-186 bears the FMN phosphoryl threonine mark. The next 5 membrane-spanning stretches (helical) occupy residues Leu-212 to Ile-232, Ile-241 to Pro-261, Leu-265 to Thr-285, Leu-298 to Pro-318, and Ala-320 to Gln-340.

Belongs to the NqrB/RnfD family. As to quaternary structure, the complex is composed of six subunits: RnfA, RnfB, RnfC, RnfD, RnfE and RnfG. It depends on FMN as a cofactor.

The protein resides in the cell inner membrane. In terms of biological role, part of a membrane-bound complex that couples electron transfer with translocation of ions across the membrane. The protein is Ion-translocating oxidoreductase complex subunit D of Actinobacillus pleuropneumoniae serotype 5b (strain L20).